The chain runs to 774 residues: E3 ubiquitin-protein ligase RFWD3 (774 aa).

A phosphoserine; by ATM and ATR mark is found at Ser-46 and Ser-63. 3 disordered regions span residues Asn-95–Ser-116, Pro-139–Gly-225, and Gly-257–Asp-280. Residues Ser-106 to Ser-116 show a composition bias toward polar residues. The segment covering Arg-150–Arg-162 has biased composition (basic residues). Over residues Ser-211–Ser-221 the composition is skewed to low complexity. Residues Cys-287–Asn-331 form an RING-type; degenerate zinc finger. Residues Ser-361–Gln-413 adopt a coiled-coil conformation. WD repeat units lie at residues Met-495 to Asn-537, Gly-539 to Gln-577, and Lys-583 to Pro-628.

In terms of assembly, interacts with MDM2 and p53/TP53. Binds to the RPA complex via direct interaction with RPA2. Interacts with RAD51. In terms of processing, phosphorylated at Ser-46 and Ser-63 upon DNA damage by ATM or ATR. ATM phosphorylation occurs at early times upon DNA damage, while ATR is the major kinase at later times. Phosphorylation by ATM and ATR is required to stabilize p53/TP53. Part of the phosphorylation depends upon RPA2 presence.

It is found in the nucleus. The protein resides in the PML body. It localises to the cytoplasm. The catalysed reaction is S-ubiquitinyl-[E2 ubiquitin-conjugating enzyme]-L-cysteine + [acceptor protein]-L-lysine = [E2 ubiquitin-conjugating enzyme]-L-cysteine + N(6)-ubiquitinyl-[acceptor protein]-L-lysine.. It functions in the pathway protein modification; protein ubiquitination. Its function is as follows. E3 ubiquitin-protein ligase required for the repair of DNA interstrand cross-links (ICL) in response to DNA damage. Plays a key role in RPA-mediated DNA damage signaling and repair. Acts by mediating ubiquitination of the RPA complex (RPA1, RPA2 and RPA3 subunits) and RAD51 at stalled replication forks, leading to remove them from DNA damage sites and promote homologous recombination. Also mediates the ubiquitination of p53/TP53 in the late response to DNA damage, and acts as a positive regulator of p53/TP53 stability, thereby regulating the G1/S DNA damage checkpoint. May act by catalyzing the formation of short polyubiquitin chains on p53/TP53 that are not targeted to the proteasome. In response to ionizing radiation, interacts with MDM2 and enhances p53/TP53 ubiquitination, possibly by restricting MDM2 from extending polyubiquitin chains on ubiquitinated p53/TP53. Required to translesion DNA synthesis across DNA-protein cross-link adducts by catalyzing ubiquitination of proteins on single-stranded DNA (ssDNA). The protein is E3 ubiquitin-protein ligase RFWD3 of Homo sapiens (Human).